The sequence spans 343 residues: Growth arrest-specific protein 1 (343 aa).

The first 38 residues, 1-38 (MLAALLGGAGARTGTLPGALLCLMALLQLLCSAPRGSG), serve as a signal peptide directing secretion. N-linked (GlcNAc...) asparagine glycosylation occurs at asparagine 114. The tract at residues 268 to 317 (EQRAGAAGGEQPLDDDDGLARPGGGAAAAGGRGDLPHGPGRRSSSSGSGG) is disordered. Gly residues predominate over residues 288 to 300 (RPGGGAAAAGGRG). The segment covering 303 to 313 (PHGPGRRSSSS) has biased composition (low complexity). Serine 315 carries the GPI-anchor amidated serine lipid modification. The propeptide at 316–343 (GGHWANRSAWTPFACLLLLLLLLLGSHL) is removed in mature form. N-linked (GlcNAc...) asparagine glycosylation occurs at asparagine 321.

The protein localises to the cell membrane. Functionally, specific growth arrest protein involved in growth suppression. Blocks entry to S phase. Prevents cycling of normal and transformed cells. Binds 20(S)-hydroxycholesterol (20(S)-OHC). The polypeptide is Growth arrest-specific protein 1 (Gas1) (Mus musculus (Mouse)).